Reading from the N-terminus, the 360-residue chain is Phospho-N-acetylmuramoyl-pentapeptide-transferase (360 aa).

Residues 1-25 lie on the Periplasmic side of the membrane; sequence MLVWLAEHLVKYYSGFNVFSYLTFR. The helical transmembrane segment at 26–46 threads the bilayer; the sequence is AIVSLLTALFISLWMGPRMIA. Residues 47–71 lie on the Cytoplasmic side of the membrane; the sequence is RLQKLSFGQVVRNDGPESHFSKRGT. Residues 72–92 form a helical membrane-spanning segment; sequence PTMGGIMILTAIVISVLLWAY. Position 93 (Pro93) is a topological domain, periplasmic. Residues 94–114 traverse the membrane as a helical segment; sequence SNPYVWCVLVVLIGYGIIGFV. The Cytoplasmic portion of the chain corresponds to 115 to 131; that stretch reads DDYRKVVRKDTKGLIAR. A helical transmembrane segment spans residues 132–152; sequence WKYFWMSVIALGVAFALYLVG. The Periplasmic segment spans residues 153–167; that stretch reads KDTPATQLVVPFFKD. The helical transmembrane segment at 168–188 threads the bilayer; it reads VMPQLGLFYILLSYFVIVGTG. At 189 to 198 the chain is on the cytoplasmic side; the sequence is NAVNLTDGLD. Residues 199-219 traverse the membrane as a helical segment; the sequence is GLAIMPTVFVAAGFALVAWAT. The Periplasmic segment spans residues 220–235; sequence GNMNFANYLHIPYLRH. The chain crosses the membrane as a helical span at residues 236 to 256; the sequence is AGELVIVCTAIVGAGLGFLWF. The Cytoplasmic portion of the chain corresponds to 257–262; the sequence is NTYPAQ. The chain crosses the membrane as a helical span at residues 263 to 283; the sequence is VFMGDVGSLALGGALGIIAVL. Topologically, residues 284–287 are periplasmic; it reads LRQE. A helical transmembrane segment spans residues 288–308; it reads FLLVIMGGVFVVETLSVILQV. Topologically, residues 309 to 337 are cytoplasmic; the sequence is GSFKLRGQRIFRMAPIHHHYELKGWPEPR. A helical membrane pass occupies residues 338–358; it reads VIVRFWIISLMLVLIGLATLK. Residues 359–360 are Periplasmic-facing; sequence VR.

This sequence belongs to the glycosyltransferase 4 family. MraY subfamily. The cofactor is Mg(2+).

It localises to the cell inner membrane. It carries out the reaction UDP-N-acetyl-alpha-D-muramoyl-L-alanyl-gamma-D-glutamyl-meso-2,6-diaminopimeloyl-D-alanyl-D-alanine + di-trans,octa-cis-undecaprenyl phosphate = di-trans,octa-cis-undecaprenyl diphospho-N-acetyl-alpha-D-muramoyl-L-alanyl-D-glutamyl-meso-2,6-diaminopimeloyl-D-alanyl-D-alanine + UMP. Its pathway is cell wall biogenesis; peptidoglycan biosynthesis. In terms of biological role, catalyzes the initial step of the lipid cycle reactions in the biosynthesis of the cell wall peptidoglycan: transfers peptidoglycan precursor phospho-MurNAc-pentapeptide from UDP-MurNAc-pentapeptide onto the lipid carrier undecaprenyl phosphate, yielding undecaprenyl-pyrophosphoryl-MurNAc-pentapeptide, known as lipid I. The protein is Phospho-N-acetylmuramoyl-pentapeptide-transferase of Salmonella agona (strain SL483).